The primary structure comprises 131 residues: MNPAIYLSCLVVFSLLLLGKVNAEDDDEFRTEKQRLLRVYGDSSVDEATRYRNVDDLVKFYDKYSTLLPWKPDLTQRAQDLLRRYKEETARAVLVDGAPAQGGFWLPLVKLLIVQLGVEIASEGFKRAIES.

Positions 1–23 (MNPAIYLSCLVVFSLLLLGKVNA) are cleaved as a signal peptide.

It belongs to the Turandot family.

The protein localises to the secreted. Its function is as follows. A humoral factor that may play a role in stress tolerance. Requires Mekk1 expression in the fat body to regulate response to septic injury and consequent immune response. This Drosophila erecta (Fruit fly) protein is Protein Turandot M.